The primary structure comprises 650 residues: Threonine--tRNA ligase, chloroplastic/mitochondrial 2 (650 aa).

Zn(2+)-binding residues include Cys-347, His-398, and His-524.

It belongs to the class-II aminoacyl-tRNA synthetase family.

The protein localises to the plastid. It is found in the chloroplast. Its subcellular location is the mitochondrion. It carries out the reaction tRNA(Thr) + L-threonine + ATP = L-threonyl-tRNA(Thr) + AMP + diphosphate + H(+). In Arabidopsis thaliana (Mouse-ear cress), this protein is Threonine--tRNA ligase, chloroplastic/mitochondrial 2.